We begin with the raw amino-acid sequence, 142 residues long: Large ribosomal subunit protein uL11 (142 aa).

Belongs to the universal ribosomal protein uL11 family. As to quaternary structure, part of the ribosomal stalk of the 50S ribosomal subunit. Interacts with L10 and the large rRNA to form the base of the stalk. L10 forms an elongated spine to which L12 dimers bind in a sequential fashion forming a multimeric L10(L12)X complex. Post-translationally, one or more lysine residues are methylated.

Its function is as follows. Forms part of the ribosomal stalk which helps the ribosome interact with GTP-bound translation factors. The sequence is that of Large ribosomal subunit protein uL11 from Brucella anthropi (strain ATCC 49188 / DSM 6882 / CCUG 24695 / JCM 21032 / LMG 3331 / NBRC 15819 / NCTC 12168 / Alc 37) (Ochrobactrum anthropi).